The sequence spans 268 residues: Ribosomal RNA small subunit methyltransferase A (268 aa).

Residues Asn23, Leu25, Gly50, Glu72, Asp94, and Asn116 each coordinate S-adenosyl-L-methionine.

Belongs to the class I-like SAM-binding methyltransferase superfamily. rRNA adenine N(6)-methyltransferase family. RsmA subfamily.

Its subcellular location is the cytoplasm. It carries out the reaction adenosine(1518)/adenosine(1519) in 16S rRNA + 4 S-adenosyl-L-methionine = N(6)-dimethyladenosine(1518)/N(6)-dimethyladenosine(1519) in 16S rRNA + 4 S-adenosyl-L-homocysteine + 4 H(+). Functionally, specifically dimethylates two adjacent adenosines (A1518 and A1519) in the loop of a conserved hairpin near the 3'-end of 16S rRNA in the 30S particle. May play a critical role in biogenesis of 30S subunits. The chain is Ribosomal RNA small subunit methyltransferase A from Mycoplasmoides gallisepticum (strain R(low / passage 15 / clone 2)) (Mycoplasma gallisepticum).